Reading from the N-terminus, the 436-residue chain is Mannan endo-1,4-beta-mannosidase F (436 aa).

Residues 1-18 form the signal peptide; that stretch reads MRSLSSVALLSAIGAASA. Residues 19-54 enclose the CBM1 domain; sequence QAGPWGQCAGISHTGPTTCESGWSCVYLNDWYSQCQ. A disordered region spans residues 60 to 88; it reads SSSTTVSSTKQPSSTVAAPSSTTSAHTLP. The segment at 79 to 113 is ser-rich linker; that stretch reads SSTTSAHTLPTGSGSFAKTDGLKFNIDGKTKYFAG. Residues 114 to 436 are catalytic; sequence TNAYWLPFLT…CAVIDHISQI (323 aa). 2 residues coordinate substrate: W146 and N260. E261 serves as the catalytic Proton donor. Y336 contributes to the substrate binding site. Catalysis depends on E370, which acts as the Nucleophile. W400 contributes to the substrate binding site.

Belongs to the glycosyl hydrolase 5 (cellulase A) family.

The protein resides in the secreted. It catalyses the reaction Random hydrolysis of (1-&gt;4)-beta-D-mannosidic linkages in mannans, galactomannans and glucomannans.. Functionally, endo-1,4-mannanase, a crucial enzyme for depolymerization of seed galactomannans and wood galactoglucomannans. The protein is Mannan endo-1,4-beta-mannosidase F (manF) of Aspergillus clavatus (strain ATCC 1007 / CBS 513.65 / DSM 816 / NCTC 3887 / NRRL 1 / QM 1276 / 107).